A 370-amino-acid polypeptide reads, in one-letter code: 3-dehydroquinate synthase (370 aa).

Residues 108-112, 132-133, Lys-145, and Lys-154 contribute to the NAD(+) site; these read GVVGD and TT. The Zn(2+) site is built by Glu-187, His-250, and His-268.

The protein belongs to the sugar phosphate cyclases superfamily. Dehydroquinate synthase family. The cofactor is Co(2+). Zn(2+) is required as a cofactor. It depends on NAD(+) as a cofactor.

It is found in the cytoplasm. It catalyses the reaction 7-phospho-2-dehydro-3-deoxy-D-arabino-heptonate = 3-dehydroquinate + phosphate. It participates in metabolic intermediate biosynthesis; chorismate biosynthesis; chorismate from D-erythrose 4-phosphate and phosphoenolpyruvate: step 2/7. Catalyzes the conversion of 3-deoxy-D-arabino-heptulosonate 7-phosphate (DAHP) to dehydroquinate (DHQ). This Caulobacter vibrioides (strain NA1000 / CB15N) (Caulobacter crescentus) protein is 3-dehydroquinate synthase.